Reading from the N-terminus, the 120-residue chain is MSIVRSSVHAKWVVGKVIGTAMIKTAKVRATRLVLDPYLLKYFNKRKTYFAHDALQQCSVGDIVLLRALPVPRSKHVKHELAEIIFKVGRVIDPVTGKPCAGTAYLESPLSEPREELKVS.

Residues 1-20 (MSIVRSSVHAKWVVGKVIGT) constitute a mitochondrion transit peptide.

The protein belongs to the universal ribosomal protein uS17 family. In terms of assembly, component of the mitochondrial ribosome small subunit (28S) which comprises a 12S rRNA and about 30 distinct proteins.

Its subcellular location is the mitochondrion. The polypeptide is Small ribosomal subunit protein uS17m (Mrps17) (Mus musculus (Mouse)).